The following is a 445-amino-acid chain: Serine/threonine-protein kinase Nek2 (445 aa).

The Protein kinase domain maps to 8–271 (YEVLYTIGTG…VEEILENPLI (264 aa)). Residues 14–22 (IGTGSYGRC) and K37 each bind ATP. The Proton acceptor role is filled by D141. Position 170 is a phosphothreonine; by autocatalysis (T170). S171 bears the Phosphoserine; by autocatalysis mark. Residues T175 and T179 each carry the phosphothreonine; by autocatalysis modification. Position 184 is a phosphoserine (S184). A Phosphoserine; by autocatalysis modification is found at S241. The segment at 264–445 (EILENPLIAD…LKSRQILGMR (182 aa)) is interaction with PCNT. Phosphoserine is present on residues S296 and S300. Residues 301-445 (PVLSELKLKE…LKSRQILGMR (145 aa)) are interaction with CEP85. Residues 303–362 (LSELKLKEIQLQERERALKAREERLEQKEQELCVRERLAEDKLARAENLLKNYSLLKERK) are a coiled coil. The tract at residues 306-334 (LKLKEIQLQERERALKAREERLEQKEQEL) is leucine-zipper. Residues 329–445 (QKEQELCVRE…LKSRQILGMR (117 aa)) are necessary for interaction with MAD1L1. Residues 333-370 (ELCVRERLAEDKLARAENLLKNYSLLKERKFLSLASNP) are required for microtubule binding and for localization to the centrosomes. Residues S356 and S365 each carry the phosphoserine; by STK3/MST2 modification. Phosphoserine is present on residues S387, S390, S397, and S402. Residues 403–439 (QLTSKSKCKDLKKRLHAAQLRAQALSDIEKNYQLKSR) are interaction with SAV1 and STK3/MST2. S406 carries the post-translational modification Phosphoserine; by STK3/MST2. Residues 406 to 430 (SKSKCKDLKKRLHAAQLRAQALSDI) adopt a coiled-coil conformation. S428 bears the Phosphoserine mark. S438 bears the Phosphoserine; by STK3/MST2 mark.

Belongs to the protein kinase superfamily. NEK Ser/Thr protein kinase family. NIMA subfamily. In terms of assembly, isoform 1, isoform 2 and isoform 4 form homo- and heterodimers. Interacts with NECAB3 and HMGA2. Isoform 1 interacts with CDC20, CTNB1, MAD1L1, MAPK, NEK11, NPM1, NDC80, PCNT and SGO1. Isoform 1 interacts with STK3/MST2 (via SARAH domain) and SAV1 (via SARAH domain). Isoform 1 and isoform 2 interact with MAD2L1. Isoform 1 and isoform 4 interact with PPP1CA and PPP1CC. Interacts with CEP68; the interaction leads to phosphorylation of CEP68. Interacts with CNTLN; the interaction leads to phosphorylation of CNTLN. Isoform 1 interacts with CEP85. Interacts with CCDC102B; the interaction leads to phosphorylation of CCDC102B. It depends on Mg(2+) as a cofactor. Activated by autophosphorylation. Protein phosphatase 1 represses autophosphorylation and activation of isoform 1 by dephosphorylation. Phosphorylation by STK3/MST2 is necessary for its localization to the centrosome. In terms of tissue distribution, isoform 1 and isoform 2 are expressed in peripheral blood T-cells and a wide variety of transformed cell types. Isoform 1 and isoform 4 are expressed in the testis. Up-regulated in various cancer cell lines, as well as primary breast tumors.

The protein localises to the nucleus. It localises to the nucleolus. It is found in the cytoplasm. Its subcellular location is the cytoskeleton. The protein resides in the microtubule organizing center. The protein localises to the centrosome. It localises to the spindle pole. It is found in the chromosome. Its subcellular location is the centromere. The protein resides in the kinetochore. It carries out the reaction L-seryl-[protein] + ATP = O-phospho-L-seryl-[protein] + ADP + H(+). The enzyme catalyses L-threonyl-[protein] + ATP = O-phospho-L-threonyl-[protein] + ADP + H(+). With respect to regulation, isoform 1 is inhibited by ionizing radiation in the presence of PPP1CA. Its catalytic activity is inhibited by the inhibitor CCT241950. In the presence of this inhibitor, displays an autoinhibited conformation: Tyr-70 side chain points into the active site, interacts with the activation loop, and blocks the alphaC helix. Its function is as follows. Protein kinase which is involved in the control of centrosome separation and bipolar spindle formation in mitotic cells and chromatin condensation in meiotic cells. Regulates centrosome separation (essential for the formation of bipolar spindles and high-fidelity chromosome separation) by phosphorylating centrosomal proteins such as CROCC, CEP250 and NINL, resulting in their displacement from the centrosomes. Regulates kinetochore microtubule attachment stability in mitosis via phosphorylation of NDC80. Involved in regulation of mitotic checkpoint protein complex via phosphorylation of CDC20 and MAD2L1. Plays an active role in chromatin condensation during the first meiotic division through phosphorylation of HMGA2. Phosphorylates: PPP1CC; SGO1; NECAB3 and NPM1. Essential for localization of MAD2L1 to kinetochore and MAPK1 and NPM1 to the centrosome. Phosphorylates CEP68 and CNTLN directly or indirectly. NEK2-mediated phosphorylation of CEP68 promotes CEP68 dissociation from the centrosome and its degradation at the onset of mitosis. Involved in the regulation of centrosome disjunction. Phosphorylates CCDC102B either directly or indirectly which causes CCDC102B to dissociate from the centrosome and allows for centrosome separation. Phosphorylates and activates NEK11 in G1/S-arrested cells. In terms of biological role, not present in the nucleolus and, in contrast to isoform 1, does not phosphorylate and activate NEK11 in G1/S-arrested cells. The chain is Serine/threonine-protein kinase Nek2 (NEK2) from Homo sapiens (Human).